The sequence spans 377 residues: Aspartate aminotransferase (377 aa).

Positions 37, 123, and 173 each coordinate L-aspartate. Position 234 is an N6-(pyridoxal phosphate)lysine (Lys234). Arg353 is an L-aspartate binding site.

This sequence belongs to the class-I pyridoxal-phosphate-dependent aminotransferase family. Homodimer. Pyridoxal 5'-phosphate is required as a cofactor.

It is found in the cytoplasm. It catalyses the reaction L-aspartate + 2-oxoglutarate = oxaloacetate + L-glutamate. The polypeptide is Aspartate aminotransferase (aspC) (Thermotoga maritima (strain ATCC 43589 / DSM 3109 / JCM 10099 / NBRC 100826 / MSB8)).